The sequence spans 467 residues: 3-isopropylmalate dehydratase large subunit (467 aa).

[4Fe-4S] cluster contacts are provided by cysteine 347, cysteine 407, and cysteine 410.

It belongs to the aconitase/IPM isomerase family. LeuC type 1 subfamily. Heterodimer of LeuC and LeuD. The cofactor is [4Fe-4S] cluster.

The enzyme catalyses (2R,3S)-3-isopropylmalate = (2S)-2-isopropylmalate. Its pathway is amino-acid biosynthesis; L-leucine biosynthesis; L-leucine from 3-methyl-2-oxobutanoate: step 2/4. Functionally, catalyzes the isomerization between 2-isopropylmalate and 3-isopropylmalate, via the formation of 2-isopropylmaleate. The protein is 3-isopropylmalate dehydratase large subunit of Prochlorococcus marinus (strain MIT 9301).